A 486-amino-acid polypeptide reads, in one-letter code: MKKLLHLFFPLSLRVRFLLATAAVVLVLSLAYGMVALIGYSVSFDKTTFRLLRGESNLFYTLAKWENNKLHVELPENIDKQSPTMTLIYDENGQLLWAQRDVPWLMKMIQPDWLKSNGFHEIEADVNDTSLLLSGDHSIQQQLQEVREDDDDAEMTHSVAVNVYPATSRMPKLTIVVVDTIPVELKSSYMVWSWFIYVLSANLLLVIPLLWVAAWWSLRPIEALAKEVRELEEHNRELLNPATTRELTSLVRNLNRLLKSERERYDKYRTTLTDLTHSLKTPLAVLQSTLRSLRSEKMSVSDAEPVMLEQISRISQQIGYYLHRASMHGGTLLSRELHPVAPLLDNLTSALNKVYQRKGVNISLDISPEISFVGEQNDFVEVMGNVLDNACKYCLEFVEISARQTDEHLYIVVEDDGPGIPLSKREVIFDRGQRVDTLRPGQGVGLAVAREITKQYEGKIVAGESMLGGARMEVIFGRQHSTPKDE.

The Cytoplasmic segment spans residues 1-16 (MKKLLHLFFPLSLRVR). The helical transmembrane segment at 17–37 (FLLATAAVVLVLSLAYGMVAL) threads the bilayer. Topologically, residues 38–194 (IGYSVSFDKT…LKSSYMVWSW (157 aa)) are periplasmic. 2 residues coordinate a divalent metal cation: Asp151 and Asp152. Residues 195–215 (FIYVLSANLLLVIPLLWVAAW) traverse the membrane as a helical segment. An HAMP domain is found at 215-266 (WWSLRPIEALAKEVRELEEHNRELLNPATTRELTSLVRNLNRLLKSERERYD). Over 216–486 (WSLRPIEALA…GRQHSTPKDE (271 aa)) the chain is Cytoplasmic. Positions 274 to 480 (DLTHSLKTPL…RMEVIFGRQH (207 aa)) constitute a Histidine kinase domain. His277 is modified (phosphohistidine; by autocatalysis). Asn385 lines the Mg(2+) pocket. Residues 385–393 (NVLDNACKY), 415–420 (DDGPGI), and 434–446 (RVDT…GVGL) each bind ATP. Gln442 is a Mg(2+) binding site.

Homodimer.

It is found in the cell inner membrane. The enzyme catalyses ATP + protein L-histidine = ADP + protein N-phospho-L-histidine.. Its function is as follows. Member of the two-component regulatory system PhoP/PhoQ involved in virulence, adaptation to low Mg(2+) environments and the control of acid resistance genes. In low periplasmic Mg(2+), PhoQ functions as a membrane-associated protein kinase that undergoes autophosphorylation and subsequently transfers the phosphate to PhoP, resulting in the expression of PhoP-activated genes (PAG) and repression of PhoP-repressed genes (PRG). In high periplasmic Mg(2+), acts as a protein phosphatase that dephosphorylates phospho-PhoP, which results in the repression of PG and may lead to expression of some PRG. This is Sensor protein PhoQ (phoQ) from Escherichia coli O157:H7.